A 112-amino-acid chain; its full sequence is Large ribosomal subunit protein bL17 (112 aa).

The protein belongs to the bacterial ribosomal protein bL17 family. Part of the 50S ribosomal subunit. Contacts protein L32.

The protein is Large ribosomal subunit protein bL17 of Heliobacterium modesticaldum (strain ATCC 51547 / Ice1).